Reading from the N-terminus, the 339-residue chain is Ribosomal RNA small subunit methyltransferase H (339 aa).

S-adenosyl-L-methionine-binding positions include glycine 44–tyrosine 46, aspartate 61, phenylalanine 88, aspartate 105, and glutamine 112. Residues proline 263 to alanine 312 are disordered. Over residues arginine 301–alanine 312 the composition is skewed to basic residues.

The protein belongs to the methyltransferase superfamily. RsmH family.

The protein resides in the cytoplasm. The catalysed reaction is cytidine(1402) in 16S rRNA + S-adenosyl-L-methionine = N(4)-methylcytidine(1402) in 16S rRNA + S-adenosyl-L-homocysteine + H(+). Its function is as follows. Specifically methylates the N4 position of cytidine in position 1402 (C1402) of 16S rRNA. The protein is Ribosomal RNA small subunit methyltransferase H of Chelativorans sp. (strain BNC1).